Reading from the N-terminus, the 1218-residue chain is Probable cation-transporting ATPase 13A5 (1218 aa).

The next 4 membrane-spanning stretches (helical) occupy residues 33-53 (KAFCLVASVLTCGGLLLVFYW), 222-242 (GYIEYSVAIIILTVISIVLSV), 401-421 (FIVFLACLGVMGFFYALGVYM), and 433-453 (MALILLTVTVPPVLPAALTIG). The 4-aspartylphosphate intermediate role is filled by Asp486. Residues Asn540, Asn669, and Asn819 are each glycosylated (N-linked (GlcNAc...) asparagine). Asp850 and Asp854 together coordinate Mg(2+). 6 helical membrane-spanning segments follow: residues 903 to 923 (FGVFKYLTMYGIIQFISALLL), 940 to 956 (VAITLMVCLTMSSTHAY), 973 to 993 (LLLSIFLNSCFSCIVQISAFL), 1042 to 1062 (FETTTLWPITTINYITVAFIF), 1077 to 1097 (IFSFLLLAALGLTIFILFSDF), and 1115 to 1135 (VLILVVALTQFCVAFFVEDSI).

The protein belongs to the cation transport ATPase (P-type) (TC 3.A.3) family. Type V subfamily.

The protein resides in the membrane. It catalyses the reaction ATP + H2O = ADP + phosphate + H(+). This Homo sapiens (Human) protein is Probable cation-transporting ATPase 13A5 (ATP13A5).